A 246-amino-acid chain; its full sequence is UDP-N-acetyl-D-mannosaminuronic acid transferase (246 aa).

Belongs to the glycosyltransferase 26 family.

The enzyme catalyses UDP-N-acetyl-alpha-D-mannosaminouronate + N-acetyl-alpha-D-glucosaminyl-di-trans,octa-cis-undecaprenyl diphosphate = beta-D-ManNAcA-(1-&gt;4)-alpha-D-GlcNAc-di-trans,octa-cis-undecaprenyl diphosphate + UDP + H(+). It participates in bacterial outer membrane biogenesis; enterobacterial common antigen biosynthesis. Functionally, catalyzes the synthesis of Und-PP-GlcNAc-ManNAcA (Lipid II), the second lipid-linked intermediate involved in enterobacterial common antigen (ECA) synthesis. The polypeptide is UDP-N-acetyl-D-mannosaminuronic acid transferase (Salmonella arizonae (strain ATCC BAA-731 / CDC346-86 / RSK2980)).